The sequence spans 34 residues: Cycloamanide B proprotein (34 aa).

Residues 1–10 (MSDINAARLP) constitute a propeptide that is removed on maturation. The cyclopeptide (Ser-Pro) cross-link spans 11–17 (SFFFPIP). The propeptide occupies 18–34 (CISDDIEMVLTRGESLC).

It belongs to the MSDIN fungal toxin family. Processed by the macrocyclase-peptidase enzyme POPB to yield a cyclic decapeptide. POPB first removes 10 residues from the N-terminus. Conformational trapping of the remaining peptide forces the enzyme to release this intermediate rather than proceed to macrocyclization. The enzyme rebinds the remaining peptide in a different conformation and catalyzes macrocyclization of the N-terminal 7 residues.

Functionally, cyclic heptapeptide that belongs to the MSDIN-like toxin family responsible for a large number of food poisoning cases and deaths. Cycloaminide B is non-toxic to mammals but shows immunosuppressive activity, probably through the inhibition of the action of interleukin-1 and interleukin-2. This is Cycloamanide B proprotein from Amanita phalloides (Death cap).